A 316-amino-acid chain; its full sequence is Deoxyribonuclease-1-like 1 (316 aa).

Residues 1-28 (MHSSGGFQKAIHGHALLLLLLLASGAET) form the signal peptide. Active-site residues include E107 and H158. C197 and C234 are disulfide-bonded. N271 carries an N-linked (GlcNAc...) asparagine glycan.

The protein belongs to the DNase I family.

The protein localises to the endoplasmic reticulum. The chain is Deoxyribonuclease-1-like 1 (DNASE1L1) from Bos taurus (Bovine).